A 38-amino-acid polypeptide reads, in one-letter code: Cytochrome b6-f complex subunit 5 (38 aa).

A helical transmembrane segment spans residues 5–25 (LVLGLVMGLVPITLAGLFVAA).

This sequence belongs to the PetG family. As to quaternary structure, the 4 large subunits of the cytochrome b6-f complex are cytochrome b6, subunit IV (17 kDa polypeptide, PetD), cytochrome f and the Rieske protein, while the 4 small subunits are PetG, PetL, PetM and PetN. The complex functions as a dimer.

It is found in the cellular thylakoid membrane. Component of the cytochrome b6-f complex, which mediates electron transfer between photosystem II (PSII) and photosystem I (PSI), cyclic electron flow around PSI, and state transitions. PetG is required for either the stability or assembly of the cytochrome b6-f complex. The sequence is that of Cytochrome b6-f complex subunit 5 from Gloeothece citriformis (strain PCC 7424) (Cyanothece sp. (strain PCC 7424)).